Here is a 610-residue protein sequence, read N- to C-terminus: UvrABC system protein C (610 aa).

One can recognise a GIY-YIG domain in the interval 16–94 (SQPGVYRMYD…IKLYQPRYNV (79 aa)). Residues 204 to 239 (DQVLTQLIARMEKASQDLAFEEAARIRDQIQAVRRV) form the UVR domain.

Belongs to the UvrC family. In terms of assembly, interacts with UvrB in an incision complex.

Its subcellular location is the cytoplasm. In terms of biological role, the UvrABC repair system catalyzes the recognition and processing of DNA lesions. UvrC both incises the 5' and 3' sides of the lesion. The N-terminal half is responsible for the 3' incision and the C-terminal half is responsible for the 5' incision. This Salmonella paratyphi C (strain RKS4594) protein is UvrABC system protein C.